The following is a 361-amino-acid chain: Ferredoxin--NADP reductase 1 (361 aa).

The FAD site is built by Asp44, Gln52, Tyr57, Ala97, Phe142, Asp308, and Ser349.

The protein belongs to the ferredoxin--NADP reductase type 2 family. As to quaternary structure, homodimer. FAD is required as a cofactor.

It carries out the reaction 2 reduced [2Fe-2S]-[ferredoxin] + NADP(+) + H(+) = 2 oxidized [2Fe-2S]-[ferredoxin] + NADPH. This chain is Ferredoxin--NADP reductase 1, found in Cupriavidus necator (strain ATCC 17699 / DSM 428 / KCTC 22496 / NCIMB 10442 / H16 / Stanier 337) (Ralstonia eutropha).